A 148-amino-acid chain; its full sequence is Azurin (148 aa).

Positions 1 to 20 (MLRKLAAVSLLSLLSAPLLA) are cleaved as a signal peptide. Positions 21-148 (AECSVDIQGN…ALMKGTLTLK (128 aa)) constitute a Plastocyanin-like domain. A disulfide bridge links Cys-23 with Cys-46. Cu cation contacts are provided by His-66, Cys-132, His-137, and Met-141.

It localises to the periplasm. Transfers electrons from cytochrome c551 to cytochrome oxidase. The chain is Azurin (azu) from Pseudomonas aeruginosa (strain ATCC 15692 / DSM 22644 / CIP 104116 / JCM 14847 / LMG 12228 / 1C / PRS 101 / PAO1).